The sequence spans 383 residues: S-adenosylmethionine synthase (383 aa).

His-16 contributes to the ATP binding site. Asp-18 is a binding site for Mg(2+). Residue Glu-44 participates in K(+) binding. L-methionine-binding residues include Glu-57 and Gln-98. Residues 98–108 (QSPDIAMGVDI) form a flexible loop region. ATP contacts are provided by residues 158–160 (DQK), 226–227 (RF), Asp-235, 241–242 (RK), Ala-258, and Lys-262. Asp-235 is a binding site for L-methionine. Lys-266 contacts L-methionine.

Belongs to the AdoMet synthase family. As to quaternary structure, homotetramer; dimer of dimers. The cofactor is Mg(2+). K(+) is required as a cofactor.

The protein resides in the cytoplasm. The catalysed reaction is L-methionine + ATP + H2O = S-adenosyl-L-methionine + phosphate + diphosphate. Its pathway is amino-acid biosynthesis; S-adenosyl-L-methionine biosynthesis; S-adenosyl-L-methionine from L-methionine: step 1/1. Functionally, catalyzes the formation of S-adenosylmethionine (AdoMet) from methionine and ATP. The overall synthetic reaction is composed of two sequential steps, AdoMet formation and the subsequent tripolyphosphate hydrolysis which occurs prior to release of AdoMet from the enzyme. The protein is S-adenosylmethionine synthase of Fusobacterium nucleatum subsp. nucleatum (strain ATCC 25586 / DSM 15643 / BCRC 10681 / CIP 101130 / JCM 8532 / KCTC 2640 / LMG 13131 / VPI 4355).